Here is a 249-residue protein sequence, read N- to C-terminus: MRILVSNDDGFHAEGIQVLATELRKIAEVIIVAPDRNRSAASSSLTLVEPLRPRHLDNGDYCVNGTPADCVHLALNGFLSGQVDLVVSGINAGCNMGDDTIYSGTLAAALEGRHLGLPAIAVSLDGRQHYETAARVVCDLIPKLHHQLLNLREIININVPDLPFEELKGYKVCRLGYRASSAEVIKQRDPRDETIYWIGPSALPEDESEGTDFYAVKNGYVSITPIQADLTAYHSLLSLQNWLDQEFTK.

A divalent metal cation contacts are provided by aspartate 8, aspartate 9, serine 39, and asparagine 91.

This sequence belongs to the SurE nucleotidase family. A divalent metal cation serves as cofactor.

Its subcellular location is the cytoplasm. The enzyme catalyses a ribonucleoside 5'-phosphate + H2O = a ribonucleoside + phosphate. Functionally, nucleotidase that shows phosphatase activity on nucleoside 5'-monophosphates. The chain is 5'-nucleotidase SurE from Haemophilus influenzae (strain PittEE).